We begin with the raw amino-acid sequence, 546 residues long: Chaperonin GroEL 2 (546 aa).

Residues 30–33 (TLGP), Lys-51, 87–91 (DGTTT), Gly-415, and Asp-495 each bind ATP. Residues 527–546 (DAAPATAPGGPGAGGPGFDF) form a disordered region. Positions 535 to 546 (GGPGAGGPGFDF) are enriched in gly residues.

Belongs to the chaperonin (HSP60) family. In terms of assembly, forms a cylinder of 14 subunits composed of two heptameric rings stacked back-to-back. Interacts with the co-chaperonin GroES.

The protein resides in the cytoplasm. It catalyses the reaction ATP + H2O + a folded polypeptide = ADP + phosphate + an unfolded polypeptide.. Together with its co-chaperonin GroES, plays an essential role in assisting protein folding. The GroEL-GroES system forms a nano-cage that allows encapsulation of the non-native substrate proteins and provides a physical environment optimized to promote and accelerate protein folding. This chain is Chaperonin GroEL 2, found in Burkholderia ambifaria (strain ATCC BAA-244 / DSM 16087 / CCUG 44356 / LMG 19182 / AMMD) (Burkholderia cepacia (strain AMMD)).